The following is a 409-amino-acid chain: tRNA-specific 2-thiouridylase MnmA (409 aa).

Residues 20–27 (AMSGGVDS) and L46 each bind ATP. C114 serves as the catalytic Nucleophile. A disulfide bridge links C114 with C210. Position 138 (G138) interacts with ATP. An interaction with tRNA region spans residues 160–162 (RDQ). Residue C210 is the Cysteine persulfide intermediate of the active site.

It belongs to the MnmA/TRMU family.

The protein localises to the cytoplasm. The catalysed reaction is S-sulfanyl-L-cysteinyl-[protein] + uridine(34) in tRNA + AH2 + ATP = 2-thiouridine(34) in tRNA + L-cysteinyl-[protein] + A + AMP + diphosphate + H(+). In terms of biological role, catalyzes the 2-thiolation of uridine at the wobble position (U34) of tRNA, leading to the formation of s(2)U34. This Bartonella henselae (strain ATCC 49882 / DSM 28221 / CCUG 30454 / Houston 1) (Rochalimaea henselae) protein is tRNA-specific 2-thiouridylase MnmA.